Reading from the N-terminus, the 122-residue chain is Acidic phospholipase A2 A' (122 aa).

Cystine bridges form between Cys26/Cys115, Cys28/Cys44, Cys43/Cys95, Cys49/Cys122, Cys50/Cys88, Cys57/Cys81, and Cys75/Cys86. Ca(2+)-binding residues include Tyr27, Gly29, and Gly31. His47 is a catalytic residue. Asp48 is a binding site for Ca(2+). Residue Asp89 is part of the active site.

This sequence belongs to the phospholipase A2 family. Group II subfamily. D49 sub-subfamily. Ca(2+) is required as a cofactor. Expressed by the venom gland.

Its subcellular location is the secreted. The enzyme catalyses a 1,2-diacyl-sn-glycero-3-phosphocholine + H2O = a 1-acyl-sn-glycero-3-phosphocholine + a fatty acid + H(+). Its function is as follows. PLA2 catalyzes the calcium-dependent hydrolysis of the 2-acyl groups in 3-sn-phosphoglycerides. In Gloydius halys (Chinese water mocassin), this protein is Acidic phospholipase A2 A'.